The sequence spans 270 residues: Small ribosomal subunit protein uS2 (270 aa).

The span at 207 to 225 shows a compositional bias: acidic residues; the sequence is EEPENTEEAAEEAATEEVV. The interval 207–270 is disordered; the sequence is EEPENTEEAA…SESAPAPVAA (64 aa). Residues 226-258 show a composition bias toward low complexity; that stretch reads ETAAAEAAAATNADNWDVAPDAGAGAADWAATD.

It belongs to the universal ribosomal protein uS2 family. As to quaternary structure, component of the small ribosomal subunit. Mature ribosomes consist of a small (40S) and a large (60S) subunit. The 40S subunit contains about 33 different proteins and 1 molecule of RNA (18S). The 60S subunit contains about 49 different proteins and 3 molecules of RNA (25S, 5.8S and 5S). Interacts with RPS21.

Its subcellular location is the cytoplasm. Its function is as follows. Required for the assembly and/or stability of the 40S ribosomal subunit. Required for the processing of the 20S rRNA-precursor to mature 18S rRNA in a late step of the maturation of 40S ribosomal subunits. The sequence is that of Small ribosomal subunit protein uS2 from Yarrowia lipolytica (strain CLIB 122 / E 150) (Yeast).